The primary structure comprises 408 residues: Arginine biosynthesis bifunctional protein ArgJ (408 aa).

Substrate-binding residues include Thr-156, Lys-182, Thr-193, Glu-279, Asn-403, and Thr-408. Thr-193 (nucleophile) is an active-site residue.

This sequence belongs to the ArgJ family. As to quaternary structure, heterotetramer of two alpha and two beta chains.

Its subcellular location is the cytoplasm. It catalyses the reaction N(2)-acetyl-L-ornithine + L-glutamate = N-acetyl-L-glutamate + L-ornithine. It carries out the reaction L-glutamate + acetyl-CoA = N-acetyl-L-glutamate + CoA + H(+). It functions in the pathway amino-acid biosynthesis; L-arginine biosynthesis; L-ornithine and N-acetyl-L-glutamate from L-glutamate and N(2)-acetyl-L-ornithine (cyclic): step 1/1. Its pathway is amino-acid biosynthesis; L-arginine biosynthesis; N(2)-acetyl-L-ornithine from L-glutamate: step 1/4. Functionally, catalyzes two activities which are involved in the cyclic version of arginine biosynthesis: the synthesis of N-acetylglutamate from glutamate and acetyl-CoA as the acetyl donor, and of ornithine by transacetylation between N(2)-acetylornithine and glutamate. This chain is Arginine biosynthesis bifunctional protein ArgJ, found in Methylococcus capsulatus (strain ATCC 33009 / NCIMB 11132 / Bath).